Here is a 344-residue protein sequence, read N- to C-terminus: Arginine N-succinyltransferase (344 aa).

Leucine 125 contributes to the succinyl-CoA binding site. Histidine 229 functions as the Proton donor in the catalytic mechanism.

Belongs to the arginine N-succinyltransferase family.

It catalyses the reaction succinyl-CoA + L-arginine = N(2)-succinyl-L-arginine + CoA + H(+). It participates in amino-acid degradation; L-arginine degradation via AST pathway; L-glutamate and succinate from L-arginine: step 1/5. In terms of biological role, catalyzes the transfer of succinyl-CoA to arginine to produce N(2)-succinylarginine. This Shigella flexneri serotype 5b (strain 8401) protein is Arginine N-succinyltransferase.